The following is a 495-amino-acid chain: Aspartyl/glutamyl-tRNA(Asn/Gln) amidotransferase subunit B (495 aa).

It belongs to the GatB/GatE family. GatB subfamily. In terms of assembly, heterotrimer of A, B and C subunits.

It carries out the reaction L-glutamyl-tRNA(Gln) + L-glutamine + ATP + H2O = L-glutaminyl-tRNA(Gln) + L-glutamate + ADP + phosphate + H(+). It catalyses the reaction L-aspartyl-tRNA(Asn) + L-glutamine + ATP + H2O = L-asparaginyl-tRNA(Asn) + L-glutamate + ADP + phosphate + 2 H(+). In terms of biological role, allows the formation of correctly charged Asn-tRNA(Asn) or Gln-tRNA(Gln) through the transamidation of misacylated Asp-tRNA(Asn) or Glu-tRNA(Gln) in organisms which lack either or both of asparaginyl-tRNA or glutaminyl-tRNA synthetases. The reaction takes place in the presence of glutamine and ATP through an activated phospho-Asp-tRNA(Asn) or phospho-Glu-tRNA(Gln). This chain is Aspartyl/glutamyl-tRNA(Asn/Gln) amidotransferase subunit B, found in Acinetobacter baylyi (strain ATCC 33305 / BD413 / ADP1).